The following is a 298-amino-acid chain: Formylmethanofuran--tetrahydromethanopterin formyltransferase (298 aa).

This sequence belongs to the FTR family. Homotetramer.

It localises to the cytoplasm. The enzyme catalyses N-formylmethanofuran + 5,6,7,8-tetrahydromethanopterin + H(+) = N(5)-formyl-5,6,7,8-tetrahydromethanopterin + methanofuran. It participates in one-carbon metabolism; formaldehyde degradation; formate from formaldehyde (H(4)MPT route): step 4/5. Its function is as follows. Catalyzes the transfer of a formyl group from 5-formyl tetrahydromethanopterin (5-formyl-H(4)MPT) to methanofuran (MFR) to produce formylmethanofuran (formyl-MFR) and tetrahydromethanopterin (H(4)MPT). In Methylococcus capsulatus (strain ATCC 33009 / NCIMB 11132 / Bath), this protein is Formylmethanofuran--tetrahydromethanopterin formyltransferase.